Consider the following 90-residue polypeptide: Acylphosphatase (90 aa).

In terms of domain architecture, Acylphosphatase-like spans 5–90 (SFVVHVWGQV…PPQKGGFHTN (86 aa)). Residues R20 and N38 contribute to the active site.

Belongs to the acylphosphatase family.

It carries out the reaction an acyl phosphate + H2O = a carboxylate + phosphate + H(+). This is Acylphosphatase (acyP) from Aeromonas salmonicida (strain A449).